A 259-amino-acid chain; its full sequence is (3R)-3-hydroxyacyl-CoA dehydrogenase (259 aa).

NAD(+) contacts are provided by residues 13–21 (LVTGAGSGI) and 40–41 (DL). Serine 58 carries the post-translational modification Phosphoserine. Residue 72 to 74 (ADV) coordinates NAD(+). Serine 154 contributes to the substrate binding site. Lysine 158 carries the N6-succinyllysine modification. Residue tyrosine 167 is the Proton acceptor of the active site. NAD(+)-binding positions include 167-171 (YAASK) and 200-202 (ITT). Residue lysine 171 is modified to N6-succinyllysine.

The protein belongs to the short-chain dehydrogenases/reductases (SDR) family. In terms of assembly, heterotetramer with CBR4; contains two molecules of HSD17B8 and CBR4.

It localises to the mitochondrion matrix. The catalysed reaction is a (3R)-3-hydroxyacyl-CoA + NAD(+) = a 3-oxoacyl-CoA + NADH + H(+). It carries out the reaction 17beta-estradiol + NAD(+) = estrone + NADH + H(+). It catalyses the reaction testosterone + NAD(+) = androst-4-ene-3,17-dione + NADH + H(+). The enzyme catalyses 17beta-hydroxy-5alpha-androstan-3-one + NAD(+) = 5alpha-androstan-3,17-dione + NADH + H(+). It participates in steroid biosynthesis; estrogen biosynthesis. It functions in the pathway lipid metabolism; fatty acid biosynthesis. The protein operates within lipid metabolism; mitochondrial fatty acid beta-oxidation. In terms of biological role, required for the solubility and assembly of the heterotetramer 3-ketoacyl-[acyl carrier protein] (ACP) reductase functional complex (KAR or KAR1) that forms part of the mitochondrial fatty acid synthase (mtFAS). Alpha-subunit of the KAR complex that acts as scaffold protein required for the stability of carbonyl reductase type-4 (CBR4, beta-subunit of the KAR complex) and for its 3-ketoacyl-ACP reductase activity, thereby participating in mitochondrial fatty acid biosynthesis. Catalyzes the NAD-dependent conversion of (3R)-3-hydroxyacyl-CoA into 3-ketoacyl-CoA (3-oxoacyl-CoA) with no chain length preference; this enzymatic activity is not needed for the KAR function. Prefers (3R)-3-hydroxyacyl-CoA over (3S)-3-hydroxyacyl-CoA and displays enzymatic activity only in the presence of NAD(+). Cooperates with enoyl-CoA hydratase 1 in mitochondria, together they constitute an alternative route to the auxiliary enzyme pathways for the breakdown of Z-PUFA (cis polyunsaturated fatty acid) enoyl-esters. NAD-dependent 17-beta-hydroxysteroid dehydrogenase with highest activity towards estradiol (17beta-estradiol or E2). Has very low activity towards testosterone and dihydrotestosterone (17beta-hydroxy-5alpha-androstan-3-one). Primarily an oxidative enzyme, it can switch to a reductive mode determined in the appropriate physiologic milieu and catalyze the reduction of estrone (E1) to form biologically active 17beta-estradiol. The sequence is that of (3R)-3-hydroxyacyl-CoA dehydrogenase (HSD17B8) from Canis lupus familiaris (Dog).